Reading from the N-terminus, the 216-residue chain is Probable GTP-binding protein EngB (216 aa).

An EngB-type G domain is found at 30–204 (SGLEVAFAGR…QMVLAGWLDL (175 aa)). GTP contacts are provided by residues 38 to 45 (GRSNAGKS), 64 to 68 (GRTQL), 82 to 85 (DLPG), 149 to 152 (TKAD), and 182 to 185 (LFSA). Residues serine 45 and threonine 66 each coordinate Mg(2+).

This sequence belongs to the TRAFAC class TrmE-Era-EngA-EngB-Septin-like GTPase superfamily. EngB GTPase family. It depends on Mg(2+) as a cofactor.

Necessary for normal cell division and for the maintenance of normal septation. This chain is Probable GTP-binding protein EngB, found in Ectopseudomonas mendocina (strain ymp) (Pseudomonas mendocina).